Here is a 404-residue protein sequence, read N- to C-terminus: Phosphopentomutase (404 aa).

Residues D10, D303, H308, D344, H345, and H356 each coordinate Mn(2+).

This sequence belongs to the phosphopentomutase family. Mn(2+) is required as a cofactor.

Its subcellular location is the cytoplasm. It catalyses the reaction 2-deoxy-alpha-D-ribose 1-phosphate = 2-deoxy-D-ribose 5-phosphate. It carries out the reaction alpha-D-ribose 1-phosphate = D-ribose 5-phosphate. Its pathway is carbohydrate degradation; 2-deoxy-D-ribose 1-phosphate degradation; D-glyceraldehyde 3-phosphate and acetaldehyde from 2-deoxy-alpha-D-ribose 1-phosphate: step 1/2. Isomerase that catalyzes the conversion of deoxy-ribose 1-phosphate (dRib-1-P) and ribose 1-phosphate (Rib-1-P) to deoxy-ribose 5-phosphate (dRib-5-P) and ribose 5-phosphate (Rib-5-P), respectively. This Shewanella sp. (strain MR-7) protein is Phosphopentomutase.